A 297-amino-acid chain; its full sequence is tRNA dimethylallyltransferase (297 aa).

G9–S16 contributes to the ATP binding site. Position 11 to 16 (T11 to S16) interacts with substrate. 2 interaction with substrate tRNA regions span residues D34–Q37 and Q155–R159.

This sequence belongs to the IPP transferase family. Monomer. Mg(2+) is required as a cofactor.

It catalyses the reaction adenosine(37) in tRNA + dimethylallyl diphosphate = N(6)-dimethylallyladenosine(37) in tRNA + diphosphate. Functionally, catalyzes the transfer of a dimethylallyl group onto the adenine at position 37 in tRNAs that read codons beginning with uridine, leading to the formation of N6-(dimethylallyl)adenosine (i(6)A). The sequence is that of tRNA dimethylallyltransferase from Leuconostoc mesenteroides subsp. mesenteroides (strain ATCC 8293 / DSM 20343 / BCRC 11652 / CCM 1803 / JCM 6124 / NCDO 523 / NBRC 100496 / NCIMB 8023 / NCTC 12954 / NRRL B-1118 / 37Y).